The sequence spans 199 residues: MSKQNKKDWKKFKDEHKEEHKVENEILEEETDEESQHQEPALGHPSYTALEEQLTLAEQKAHENWEKSVRALAELENVRRRMEREVANAHKYGVEKLISALLPVVDSLEQALQLADKNSDPSMHEGLELTMKLFLDALQKFDVEQIDPLGQTFDPQQHEAMSMQPAPGAPPNSVITVFQKGYKLSDRVIRPARVIVSTK.

Positions 1–24 are enriched in basic and acidic residues; sequence MSKQNKKDWKKFKDEHKEEHKVEN. The segment at 1–52 is disordered; sequence MSKQNKKDWKKFKDEHKEEHKVENEILEEETDEESQHQEPALGHPSYTALEE.

This sequence belongs to the GrpE family. In terms of assembly, homodimer.

Its subcellular location is the cytoplasm. Participates actively in the response to hyperosmotic and heat shock by preventing the aggregation of stress-denatured proteins, in association with DnaK and GrpE. It is the nucleotide exchange factor for DnaK and may function as a thermosensor. Unfolded proteins bind initially to DnaJ; upon interaction with the DnaJ-bound protein, DnaK hydrolyzes its bound ATP, resulting in the formation of a stable complex. GrpE releases ADP from DnaK; ATP binding to DnaK triggers the release of the substrate protein, thus completing the reaction cycle. Several rounds of ATP-dependent interactions between DnaJ, DnaK and GrpE are required for fully efficient folding. This Legionella pneumophila protein is Protein GrpE.